A 125-amino-acid polypeptide reads, in one-letter code: MTTFKLVISDPKSGIAKQIEISGANAEKLIGKKIGDQIPVKELGLDLKALFGKDFPEDVKMEIRGGTDKDGFPMRPDIHGPRRVRILLSKGPGFRPKEKGERRKKTVRGNTISPEIVQVNVKLVY.

This sequence belongs to the eukaryotic ribosomal protein eS6 family.

This chain is Small ribosomal subunit protein eS6, found in Pyrococcus horikoshii (strain ATCC 700860 / DSM 12428 / JCM 9974 / NBRC 100139 / OT-3).